The following is an 851-amino-acid chain: MRKSSSPSLSNCNSDLASKIFGIPLDELQQGGHPDNEVPFIVRHVVDYIEEHGGLEQQGLFQVNGNAETVEWLRQRYDSGEEVDLVKEADVPSAISLLRFFLQELPEPVIPGSLHIHLLQLSQDYNNEDEFGRKLRFLLQQLPPVNYSLLKFLCRFLANVASHHEEIWSANSLAAVFGPDVFHIYTDVEDMKEQEIVSRIMAGLLENYYEFFENEEEDFSSNDLSSITEQVNELSEEEEEDEKLEHIEELPEEGVEKSAGMPEVLQLRMTENLLDSDSVTASTRIDAAAATTTNASDGNIKCSKPVAGTTADNEVMQQDFVFEDQKNNESVGILLEPCSDHGDSEDGCPERKEYLLCDSDKLPHLILDSSSKIRDLNANTELEVTEGQSVGVQGEAACIQIAQLDLKNVSDGDKWEEPFPAFKSWQEDCESGEAQLSPQAARMTHHPLGEDCPPVLSHRSLDFGQSQRFLHDPEALDFSSKALSFTRIRRSSFSSKDEKREDRTPYQLVKKLQKKIRQFEEQFERERNSKPSYSDIAANPKVLKWMTELTKLRKQIKDAKHKNSDGEFAPQTRPRSNTLPKSFGSSLDHEDGESEGEPRVIQKEKTPSKEATLELITKRLKENRAERHLPEDIKKMTKDHLIEEKTSLQKSLLYYESQHGRPVTREERHIVKPLYDRYRLVKQMLTRASITPVLGSPSTKRRGQMLQPIIEGETAHFFEEIKEEEEDGVSLSSELGDILSTSVHTQSSLENLESDAEENQEKLARDLCLSSTRAASVPELLEQLWKARAEKKKLRKMLREFEEAFYQQNGRNAQKEDRVPVLEEYKEYKRIKAKLRLLEVLISKQDSSKSI.

The Rho-GAP domain maps to 23–212 (IPLDELQQGG…GLLENYYEFF (190 aa)). Residues 556–565 (IKDAKHKNSD) show a composition bias toward basic and acidic residues. Residues 556–611 (IKDAKHKNSDGEFAPQTRPRSNTLPKSFGSSLDHEDGESEGEPRVIQKEKTPSKEA) are disordered. Residues 573 to 585 (RPRSNTLPKSFGS) are compositionally biased toward polar residues. Residues 596 to 611 (GEPRVIQKEKTPSKEA) are compositionally biased toward basic and acidic residues.

Belongs to the FAM13 family.

This chain is Protein FAM13B (Fam13b), found in Mus musculus (Mouse).